The primary structure comprises 825 residues: Probable phosphoketolase (825 aa).

This sequence belongs to the XFP family. It depends on thiamine diphosphate as a cofactor.

The polypeptide is Probable phosphoketolase (Bifidobacterium animalis subsp. lactis (strain AD011)).